Consider the following 458-residue polypeptide: UDP-N-acetylmuramate--L-alanine ligase (458 aa).

112–118 (GTHGKTT) is a binding site for ATP.

The protein belongs to the MurCDEF family.

The protein resides in the cytoplasm. The enzyme catalyses UDP-N-acetyl-alpha-D-muramate + L-alanine + ATP = UDP-N-acetyl-alpha-D-muramoyl-L-alanine + ADP + phosphate + H(+). It functions in the pathway cell wall biogenesis; peptidoglycan biosynthesis. In terms of biological role, cell wall formation. The sequence is that of UDP-N-acetylmuramate--L-alanine ligase from Geotalea uraniireducens (strain Rf4) (Geobacter uraniireducens).